The primary structure comprises 152 residues: Sec-independent protein translocase protein TatB (152 aa).

A helical membrane pass occupies residues 1–21 (MFGISFSELLLVGLVALLVLG). Low complexity predominate over residues 98 to 115 (HAPGAATVAEAPPASEVP). A disordered region spans residues 98–152 (HAPGAATVAEAPPASEVPAPLPSTPAPAPTAEPAAPVATPATTAPHDSTLPPRAP). A compositionally biased stretch (pro residues) spans 116-127 (APLPSTPAPAPT). The segment covering 128–142 (AEPAAPVATPATTAP) has biased composition (low complexity).

The protein belongs to the TatB family. In terms of assembly, the Tat system comprises two distinct complexes: a TatABC complex, containing multiple copies of TatA, TatB and TatC subunits, and a separate TatA complex, containing only TatA subunits. Substrates initially bind to the TatABC complex, which probably triggers association of the separate TatA complex to form the active translocon.

It localises to the cell inner membrane. In terms of biological role, part of the twin-arginine translocation (Tat) system that transports large folded proteins containing a characteristic twin-arginine motif in their signal peptide across membranes. Together with TatC, TatB is part of a receptor directly interacting with Tat signal peptides. TatB may form an oligomeric binding site that transiently accommodates folded Tat precursor proteins before their translocation. The sequence is that of Sec-independent protein translocase protein TatB from Pseudomonas fluorescens (strain ATCC BAA-477 / NRRL B-23932 / Pf-5).